Reading from the N-terminus, the 214-residue chain is uncharacterized protein (214 aa).

The N-terminal 49 residues, 1 to 49 (MATRGAVAAAASTIWKHRRNPSLRSLSRHFNPNFNHRIIPTGFKYQVRA), are a transit peptide targeting the chloroplast.

Its subcellular location is the plastid. It localises to the chloroplast. This is an uncharacterized protein from Arabidopsis thaliana (Mouse-ear cress).